A 55-amino-acid chain; its full sequence is Large ribosomal subunit protein bL33 (55 aa).

This sequence belongs to the bacterial ribosomal protein bL33 family.

The chain is Large ribosomal subunit protein bL33 from Jannaschia sp. (strain CCS1).